The primary structure comprises 192 residues: Probable nicotinate-nucleotide adenylyltransferase (192 aa).

This sequence belongs to the NadD family.

It carries out the reaction nicotinate beta-D-ribonucleotide + ATP + H(+) = deamido-NAD(+) + diphosphate. It participates in cofactor biosynthesis; NAD(+) biosynthesis; deamido-NAD(+) from nicotinate D-ribonucleotide: step 1/1. Its function is as follows. Catalyzes the reversible adenylation of nicotinate mononucleotide (NaMN) to nicotinic acid adenine dinucleotide (NaAD). In Rhizobium etli (strain CIAT 652), this protein is Probable nicotinate-nucleotide adenylyltransferase.